The sequence spans 65 residues: Large ribosomal subunit protein bL35 (65 aa).

Belongs to the bacterial ribosomal protein bL35 family.

The polypeptide is Large ribosomal subunit protein bL35 (Prochlorococcus marinus (strain MIT 9301)).